The sequence spans 215 residues: MOB kinase activator-like 1B (215 aa).

The segment at 1-25 (MSLFGLGRNQKTFRPKKSAPSGTKG) is disordered. 4 residues coordinate Zn(2+): cysteine 79, cysteine 84, histidine 161, and histidine 166.

The protein belongs to the MOB1/phocein family. As to quaternary structure, interacts with SIK1. Expression is detected along the vasculature in cotyledons, hypocotyls and roots of 3- to 4-day-old seedlings.

The sequence is that of MOB kinase activator-like 1B from Arabidopsis thaliana (Mouse-ear cress).